The primary structure comprises 365 residues: tRNA N6-adenosine threonylcarbamoyltransferase (365 aa).

Residues histidine 119 and histidine 123 each contribute to the Fe cation site. Substrate is bound by residues 141 to 145, aspartate 174, and glycine 187; that span reads LVSGG. The segment at 184-203 is disordered; that stretch reads QPGGPSVEGEARQGDPKRFR. The segment covering 192 to 201 has biased composition (basic and acidic residues); it reads GEARQGDPKR. Substrate is bound at residue asparagine 289. Aspartate 317 contributes to the Fe cation binding site. The disordered stretch occupies residues 342–365; sequence ARPRWPLDQSSPAMLGSGKKGAKA.

Belongs to the KAE1 / TsaD family. The cofactor is Fe(2+).

The protein resides in the cytoplasm. It catalyses the reaction L-threonylcarbamoyladenylate + adenosine(37) in tRNA = N(6)-L-threonylcarbamoyladenosine(37) in tRNA + AMP + H(+). Required for the formation of a threonylcarbamoyl group on adenosine at position 37 (t(6)A37) in tRNAs that read codons beginning with adenine. Is involved in the transfer of the threonylcarbamoyl moiety of threonylcarbamoyl-AMP (TC-AMP) to the N6 group of A37, together with TsaE and TsaB. TsaD likely plays a direct catalytic role in this reaction. The polypeptide is tRNA N6-adenosine threonylcarbamoyltransferase (Ruegeria pomeroyi (strain ATCC 700808 / DSM 15171 / DSS-3) (Silicibacter pomeroyi)).